A 378-amino-acid polypeptide reads, in one-letter code: Biotin synthase (378 aa).

The Radical SAM core domain occupies 68 to 292; that stretch reads NEVQISTLLS…IAVTRICCPS (225 aa). Residues cysteine 83, cysteine 87, and cysteine 90 each coordinate [4Fe-4S] cluster. [2Fe-2S] cluster contacts are provided by cysteine 129, cysteine 160, cysteine 220, and arginine 296.

Belongs to the radical SAM superfamily. Biotin synthase family. In terms of assembly, homodimer. [4Fe-4S] cluster is required as a cofactor. It depends on [2Fe-2S] cluster as a cofactor.

It catalyses the reaction (4R,5S)-dethiobiotin + (sulfur carrier)-SH + 2 reduced [2Fe-2S]-[ferredoxin] + 2 S-adenosyl-L-methionine = (sulfur carrier)-H + biotin + 2 5'-deoxyadenosine + 2 L-methionine + 2 oxidized [2Fe-2S]-[ferredoxin]. It functions in the pathway cofactor biosynthesis; biotin biosynthesis; biotin from 7,8-diaminononanoate: step 2/2. Its function is as follows. Catalyzes the conversion of dethiobiotin (DTB) to biotin by the insertion of a sulfur atom into dethiobiotin via a radical-based mechanism. The protein is Biotin synthase of Psychrobacter arcticus (strain DSM 17307 / VKM B-2377 / 273-4).